Here is a 239-residue protein sequence, read N- to C-terminus: Aspartate/glutamate leucyltransferase (239 aa).

The protein belongs to the R-transferase family. Bpt subfamily.

The protein resides in the cytoplasm. It carries out the reaction N-terminal L-glutamyl-[protein] + L-leucyl-tRNA(Leu) = N-terminal L-leucyl-L-glutamyl-[protein] + tRNA(Leu) + H(+). The enzyme catalyses N-terminal L-aspartyl-[protein] + L-leucyl-tRNA(Leu) = N-terminal L-leucyl-L-aspartyl-[protein] + tRNA(Leu) + H(+). Functions in the N-end rule pathway of protein degradation where it conjugates Leu from its aminoacyl-tRNA to the N-termini of proteins containing an N-terminal aspartate or glutamate. The chain is Aspartate/glutamate leucyltransferase from Alkalilimnicola ehrlichii (strain ATCC BAA-1101 / DSM 17681 / MLHE-1).